The chain runs to 120 residues: Large ribosomal subunit protein bL19 (120 aa).

This sequence belongs to the bacterial ribosomal protein bL19 family.

Its function is as follows. This protein is located at the 30S-50S ribosomal subunit interface and may play a role in the structure and function of the aminoacyl-tRNA binding site. The protein is Large ribosomal subunit protein bL19 of Synechococcus sp. (strain ATCC 27144 / PCC 6301 / SAUG 1402/1) (Anacystis nidulans).